A 1148-amino-acid polypeptide reads, in one-letter code: Replication factor C subunit 1 (1148 aa).

Residues 46-56 show a composition bias toward basic and acidic residues; sequence NSSRKEDDFKQ. Disordered regions lie at residues 46–201 and 228–380; these read NSSR…LNDE and TLAM…TNYQ. A Glycyl lysine isopeptide (Lys-Gly) (interchain with G-Cter in SUMO2) cross-link involves residue Lys-50. Tyr-67 is subject to Phosphotyrosine. Phosphoserine occurs at positions 69, 71, 73, and 108. Thr-110 carries the post-translational modification Phosphothreonine. Polar residues predominate over residues 130-141; that stretch reads RSTNSHLGTSNM. Ser-156 carries the phosphoserine modification. Phosphothreonine is present on residues Thr-161 and Thr-163. Phosphoserine occurs at positions 164, 173, and 190. A compositionally biased stretch (basic and acidic residues) spans 234–246; that stretch reads EEPKTKKARKDTE. A Phosphoserine modification is found at Ser-253. Positions 262–271 are enriched in basic residues; sequence EKHKYPHKVK. A phosphoserine mark is found at Ser-281 and Ser-283. Basic and acidic residues predominate over residues 288 to 308; the sequence is SKYESSKESQQHSKSSADKIG. The residue at position 312 (Ser-312) is a Phosphoserine. 2 stretches are compositionally biased toward basic and acidic residues: residues 323–353 and 362–376; these read KRKEESSYKEIEPVASKRKENAIKLKGETKT and AKKESVSPEDSEKKR. Residue Ser-368 is modified to Phosphoserine. The BRCT domain occupies 402–492; sequence GAENCLEGLI…PGKKSKYEIA (91 aa). Composition is skewed to basic and acidic residues over residues 496-507 and 520-538; these read EMKKESKLERTP and SKKESESKKSRPTSKRDSL. Residues 496–538 form a disordered region; the sequence is EMKKESKLERTPQKNVQGKRKISPSKKESESKKSRPTSKRDSL. Ser-537 is modified (phosphoserine). 650–657 is an ATP binding site; it reads SGPPGVGK. The tract at residues 1081 to 1148 is disordered; the sequence is KASRHSTSPS…RKGKGKSSKK (68 aa). Residues 1094–1105 show a composition bias toward acidic residues; it reads EYNEELNEDDSQ. Residues Ser-1104 and Ser-1106 each carry the phosphoserine modification. Positions 1120–1124 match the Nuclear localization signal motif; sequence IKKKT. Over residues 1130 to 1140 the composition is skewed to basic and acidic residues; sequence SKPEKDKEPRK.

This sequence belongs to the activator 1 large subunit family. Large subunit of the RFC complex, an heteropentameric complex consisting of RFC1 and four small subunits RFC2, RFC3, RFC4 and RFC5; the RFC complex interacts with PCNA and the interaction involves RFC1. As to expression, wide tissue distribution. Undetectable in placental tissue.

The protein localises to the nucleus. Its function is as follows. Subunit of the replication factor C (RFC) complex which acts during elongation of primed DNA templates by DNA polymerases delta and epsilon, and is necessary for ATP-dependent loading of proliferating cell nuclear antigen (PCNA) onto primed DNA. This subunit binds to the primer-template junction. Binds the PO-B transcription element as well as other GA rich DNA sequences. Can bind single- or double-stranded DNA. This is Replication factor C subunit 1 (RFC1) from Homo sapiens (Human).